The sequence spans 415 residues: Gamma-glutamyl phosphate reductase (415 aa).

It belongs to the gamma-glutamyl phosphate reductase family.

The protein resides in the cytoplasm. The enzyme catalyses L-glutamate 5-semialdehyde + phosphate + NADP(+) = L-glutamyl 5-phosphate + NADPH + H(+). It participates in amino-acid biosynthesis; L-proline biosynthesis; L-glutamate 5-semialdehyde from L-glutamate: step 2/2. Functionally, catalyzes the NADPH-dependent reduction of L-glutamate 5-phosphate into L-glutamate 5-semialdehyde and phosphate. The product spontaneously undergoes cyclization to form 1-pyrroline-5-carboxylate. This chain is Gamma-glutamyl phosphate reductase, found in Bacillus subtilis (strain 168).